The sequence spans 265 residues: DNA-binding dual transcriptional regulator Rns (265 aa).

Residues His-20 and Arg-75 each coordinate decanoate. An HTH araC/xylS-type domain is found at Asp-164 to Tyr-261. 2 DNA-binding regions (H-T-H motif) span residues Gly-181–Asn-202 and Ile-228–Tyr-251.

Homodimer; each subunit binds one decanoate molecule.

Its subcellular location is the cytoplasm. Rns-dependent expression of pilins and outer membrane proteins CexE-alpha and CexE-epsilon are inhibited in vivo by decanoic acid (decanoate); has no effect on expression of DnaK or flagellins. Decanoate relieves Rns-dependent repression of nlpA. Functionally, a transcription factor required for the expression of the CS1 and CS2 adhesins of enterotoxigenic E.coli. Required for expression of pilins and some outer membrane lipoproteins. Represses expression of nlpA. The polypeptide is DNA-binding dual transcriptional regulator Rns (Escherichia coli).